The primary structure comprises 205 residues: Small ribosomal subunit protein uS4 (205 aa).

The S4 RNA-binding domain maps to 94 to 172; the sequence is SRLDSIVYRM…TTPDYVSFDV (79 aa).

The protein belongs to the universal ribosomal protein uS4 family. Part of the 30S ribosomal subunit. Contacts protein S5. The interaction surface between S4 and S5 is involved in control of translational fidelity.

In terms of biological role, one of the primary rRNA binding proteins, it binds directly to 16S rRNA where it nucleates assembly of the body of the 30S subunit. Its function is as follows. With S5 and S12 plays an important role in translational accuracy. The sequence is that of Small ribosomal subunit protein uS4 from Rickettsia bellii (strain OSU 85-389).